Consider the following 387-residue polypeptide: Chorismate synthase (387 aa).

Arg42 and Arg48 together coordinate NADP(+). FMN is bound by residues 131-133 (RSS), 251-252 (QA), Gly295, 310-314 (KPIPT), and Arg336.

It belongs to the chorismate synthase family. In terms of assembly, homotetramer. The cofactor is FMNH2.

The enzyme catalyses 5-O-(1-carboxyvinyl)-3-phosphoshikimate = chorismate + phosphate. Its pathway is metabolic intermediate biosynthesis; chorismate biosynthesis; chorismate from D-erythrose 4-phosphate and phosphoenolpyruvate: step 7/7. Functionally, catalyzes the anti-1,4-elimination of the C-3 phosphate and the C-6 proR hydrogen from 5-enolpyruvylshikimate-3-phosphate (EPSP) to yield chorismate, which is the branch point compound that serves as the starting substrate for the three terminal pathways of aromatic amino acid biosynthesis. This reaction introduces a second double bond into the aromatic ring system. This chain is Chorismate synthase, found in Syntrophotalea carbinolica (strain DSM 2380 / NBRC 103641 / GraBd1) (Pelobacter carbinolicus).